Reading from the N-terminus, the 217-residue chain is Uracil-DNA glycosylase (217 aa).

D62 acts as the Proton acceptor in catalysis.

It belongs to the uracil-DNA glycosylase (UDG) superfamily. UNG family.

It is found in the cytoplasm. It catalyses the reaction Hydrolyzes single-stranded DNA or mismatched double-stranded DNA and polynucleotides, releasing free uracil.. Functionally, excises uracil residues from the DNA which can arise as a result of misincorporation of dUMP residues by DNA polymerase or due to deamination of cytosine. This Streptococcus pneumoniae (strain P1031) protein is Uracil-DNA glycosylase.